A 191-amino-acid polypeptide reads, in one-letter code: Thymidine kinase (191 aa).

ATP contacts are provided by residues Gly-15–Thr-22 and Asp-88–Gln-91. Glu-89 functions as the Proton acceptor in the catalytic mechanism. Zn(2+) contacts are provided by Cys-145, Cys-148, Cys-183, and Cys-186.

The protein belongs to the thymidine kinase family. In terms of assembly, homotetramer.

It is found in the cytoplasm. It carries out the reaction thymidine + ATP = dTMP + ADP + H(+). This Clostridium botulinum (strain Kyoto / Type A2) protein is Thymidine kinase.